Consider the following 296-residue polypeptide: Pyruvate synthase subunit PorB (296 aa).

[4Fe-4S] cluster-binding residues include Cys17, Cys20, and Cys45. Over residues Thr140–Pro150 the composition is skewed to polar residues. The disordered stretch occupies residues Thr140 to Pro159. A [4Fe-4S] cluster-binding site is contributed by Cys210.

In terms of assembly, heterotetramer of one alpha, one beta, one delta and one gamma chain. [4Fe-4S] cluster is required as a cofactor.

It carries out the reaction 2 oxidized [2Fe-2S]-[ferredoxin] + pyruvate + CoA = 2 reduced [2Fe-2S]-[ferredoxin] + acetyl-CoA + CO2 + H(+). This chain is Pyruvate synthase subunit PorB (porB), found in Methanosarcina barkeri (strain Fusaro / DSM 804).